An 869-amino-acid polypeptide reads, in one-letter code: Aconitate hydratase B (869 aa).

Substrate is bound by residues arginine 191, 244-246 (SSR), 417-419 (QDT), and serine 501. [4Fe-4S] cluster is bound by residues cysteine 713, cysteine 772, and cysteine 775. Residues arginine 794 and arginine 799 each contribute to the substrate site.

This sequence belongs to the aconitase/IPM isomerase family. As to quaternary structure, monomer. It depends on [4Fe-4S] cluster as a cofactor.

It catalyses the reaction citrate = D-threo-isocitrate. The enzyme catalyses (2S,3R)-3-hydroxybutane-1,2,3-tricarboxylate = 2-methyl-cis-aconitate + H2O. It participates in carbohydrate metabolism; tricarboxylic acid cycle; isocitrate from oxaloacetate: step 2/2. It functions in the pathway organic acid metabolism; propanoate degradation. Involved in the catabolism of short chain fatty acids (SCFA) via the tricarboxylic acid (TCA)(acetyl degradation route) and probably via the 2-methylcitrate cycle I (propionate degradation route). Catalyzes the reversible isomerization of citrate to isocitrate via cis-aconitate. Catalyzes the hydration of 2-methyl-cis-aconitate to yield (2R,3S)-2-methylisocitrate. The apo form of AcnB functions as a RNA-binding regulatory protein. This chain is Aconitate hydratase B (acnB), found in Pseudomonas aeruginosa (strain ATCC 15692 / DSM 22644 / CIP 104116 / JCM 14847 / LMG 12228 / 1C / PRS 101 / PAO1).